Reading from the N-terminus, the 131-residue chain is D-ribose pyranase (131 aa).

Catalysis depends on histidine 20, which acts as the Proton donor. Substrate-binding positions include aspartate 28, histidine 98, and 120 to 122; that span reads YAN.

It belongs to the RbsD / FucU family. RbsD subfamily. Homodecamer.

The protein resides in the cytoplasm. The catalysed reaction is beta-D-ribopyranose = beta-D-ribofuranose. It functions in the pathway carbohydrate metabolism; D-ribose degradation; D-ribose 5-phosphate from beta-D-ribopyranose: step 1/2. Functionally, catalyzes the interconversion of beta-pyran and beta-furan forms of D-ribose. This chain is D-ribose pyranase, found in Chloroflexus aggregans (strain MD-66 / DSM 9485).